An 82-amino-acid chain; its full sequence is uncharacterized protein (82 aa).

Residues 1 to 82 form the 2Fe-2S ferredoxin-type domain; sequence MKIHLIRHNT…HVESDIEIDL (82 aa). Residues C35, C40, C43, and C72 each coordinate [2Fe-2S] cluster.

[2Fe-2S] cluster serves as cofactor.

This is an uncharacterized protein from Haemophilus influenzae (strain ATCC 51907 / DSM 11121 / KW20 / Rd).